The following is a 253-amino-acid chain: Proproteinase E (253 aa).

A propeptide spans 1–11 (FSQPFSRPSSR) (activation peptide). A Peptidase S1 domain is found at 12–251 (VVNGEDAVPY…FIDWIDETIA (240 aa)). 5 disulfides stabilise this stretch: C41–C57, C100–C103, C140–C206, C171–C187, and C196–C227.

It belongs to the peptidase S1 family. In terms of assembly, monomer. The zymogen is secreted as a ternary complex composed of procarboxypeptidase A, chymotrypsinogen C and proproteinase E. As to expression, pancreas.

The protein resides in the secreted. It is found in the extracellular space. In terms of biological role, may protect procarboxypeptidase A against denaturation in the acidic environment of the ruminant duodenum. The polypeptide is Proproteinase E (Bos taurus (Bovine)).